The chain runs to 487 residues: uncharacterized protein (487 aa).

2 consecutive ABC transporter domains span residues 5 to 249 and 265 to 487; these read VKFA…IPVK and ISME…VIHA. 297 to 304 contributes to the ATP binding site; it reads GSNGSGKT.

Belongs to the ABC transporter superfamily.

The protein localises to the mitochondrion. This is an uncharacterized protein from Schizosaccharomyces pombe (strain 972 / ATCC 24843) (Fission yeast).